The sequence spans 416 residues: MAYFLEQTDSEIFEFIVEEFKRQNEHLEMIASENYTFPSVMEAMGSILTNKYAEGYPNKRYYGGCEVVDKIESLAIERAKKLFNCQFANVQAHSGSQANNAVYHALLKLYDKILGMDLSCGGHLTHGAKVSLTGKHYQSFSYGVGLDGYIDYEEALKIAQSVKPQIIVCGFSAYPREIDFKKFREIADAVGALLLGDIAHVAGLVVANEHAHPFPHCHVVSSTTHKTLRGPRGGLILTNDEEIAAKIDKAIFPGTQGGPLMHVIAAKAVGFKENLKPEFKAYAKLVKSNMQVLAKTLKEKNHKLVSGGTSNHLLLMDFLDKPYSGKDADIALGNAGITVNKNTIPGETRNPFVTSGIRIGSAALSARGMGAKEFEIIGNKISDILNDINNVSLQLHVKEELKTMANQFPVYHQPIF.

Residues Leu118 and 122 to 124 (GHL) contribute to the (6S)-5,6,7,8-tetrahydrofolate site. Lys226 bears the N6-(pyridoxal phosphate)lysine mark. Residue Glu242 participates in (6S)-5,6,7,8-tetrahydrofolate binding.

Belongs to the SHMT family. Homodimer. Pyridoxal 5'-phosphate serves as cofactor.

Its subcellular location is the cytoplasm. The enzyme catalyses (6R)-5,10-methylene-5,6,7,8-tetrahydrofolate + glycine + H2O = (6S)-5,6,7,8-tetrahydrofolate + L-serine. It functions in the pathway one-carbon metabolism; tetrahydrofolate interconversion. The protein operates within amino-acid biosynthesis; glycine biosynthesis; glycine from L-serine: step 1/1. Catalyzes the reversible interconversion of serine and glycine with tetrahydrofolate (THF) serving as the one-carbon carrier. This reaction serves as the major source of one-carbon groups required for the biosynthesis of purines, thymidylate, methionine, and other important biomolecules. Also exhibits THF-independent aldolase activity toward beta-hydroxyamino acids, producing glycine and aldehydes, via a retro-aldol mechanism. The sequence is that of Serine hydroxymethyltransferase from Helicobacter pylori (strain J99 / ATCC 700824) (Campylobacter pylori J99).